The chain runs to 109 residues: Large ribosomal subunit protein uL22 (109 aa).

Belongs to the universal ribosomal protein uL22 family. In terms of assembly, part of the 50S ribosomal subunit.

Functionally, this protein binds specifically to 23S rRNA; its binding is stimulated by other ribosomal proteins, e.g. L4, L17, and L20. It is important during the early stages of 50S assembly. It makes multiple contacts with different domains of the 23S rRNA in the assembled 50S subunit and ribosome. In terms of biological role, the globular domain of the protein is located near the polypeptide exit tunnel on the outside of the subunit, while an extended beta-hairpin is found that lines the wall of the exit tunnel in the center of the 70S ribosome. This Azoarcus sp. (strain BH72) protein is Large ribosomal subunit protein uL22.